The sequence spans 724 residues: Catalase-peroxidase (724 aa).

A cross-link (tryptophyl-tyrosyl-methioninium (Trp-Tyr) (with M-252)) is located at residues 98-226 (WHSAGSYRIA…LAAVMMGLIY (129 aa)). His-99 (proton acceptor) is an active-site residue. The tryptophyl-tyrosyl-methioninium (Tyr-Met) (with W-98) cross-link spans 226–252 (YVNPEGVDGHPDPQKTANDVRVTFARM). Position 267 (His-267) interacts with heme b.

It belongs to the peroxidase family. Peroxidase/catalase subfamily. As to quaternary structure, homodimer or homotetramer. Heme b is required as a cofactor. In terms of processing, formation of the three residue Trp-Tyr-Met cross-link is important for the catalase, but not the peroxidase activity of the enzyme.

The enzyme catalyses H2O2 + AH2 = A + 2 H2O. It catalyses the reaction 2 H2O2 = O2 + 2 H2O. Functionally, bifunctional enzyme with both catalase and broad-spectrum peroxidase activity. The chain is Catalase-peroxidase from Edwardsiella tarda.